Consider the following 184-residue polypeptide: Photosystem I assembly protein Ycf4 (184 aa).

The next 2 membrane-spanning stretches (helical) occupy residues 21-43 (NFCW…ISSY) and 63-85 (GLVM…CAIS).

Belongs to the Ycf4 family.

Its subcellular location is the plastid. It localises to the chloroplast thylakoid membrane. Functionally, seems to be required for the assembly of the photosystem I complex. The protein is Photosystem I assembly protein Ycf4 of Spinacia oleracea (Spinach).